Here is a 458-residue protein sequence, read N- to C-terminus: Methylenetetrahydrofolate--tRNA-(uracil-5-)-methyltransferase TrmFO (458 aa).

Residue 11 to 16 (GGGMAG) participates in FAD binding.

This sequence belongs to the MnmG family. TrmFO subfamily. FAD serves as cofactor.

It is found in the cytoplasm. The enzyme catalyses uridine(54) in tRNA + (6R)-5,10-methylene-5,6,7,8-tetrahydrofolate + NADH + H(+) = 5-methyluridine(54) in tRNA + (6S)-5,6,7,8-tetrahydrofolate + NAD(+). It carries out the reaction uridine(54) in tRNA + (6R)-5,10-methylene-5,6,7,8-tetrahydrofolate + NADPH + H(+) = 5-methyluridine(54) in tRNA + (6S)-5,6,7,8-tetrahydrofolate + NADP(+). In terms of biological role, catalyzes the folate-dependent formation of 5-methyl-uridine at position 54 (M-5-U54) in all tRNAs. The protein is Methylenetetrahydrofolate--tRNA-(uracil-5-)-methyltransferase TrmFO of Jannaschia sp. (strain CCS1).